The primary structure comprises 133 residues: Ribosome-binding factor A (133 aa).

It belongs to the RbfA family. Monomer. Binds 30S ribosomal subunits, but not 50S ribosomal subunits or 70S ribosomes.

It is found in the cytoplasm. Its function is as follows. One of several proteins that assist in the late maturation steps of the functional core of the 30S ribosomal subunit. Associates with free 30S ribosomal subunits (but not with 30S subunits that are part of 70S ribosomes or polysomes). Required for efficient processing of 16S rRNA. May interact with the 5'-terminal helix region of 16S rRNA. This Trichormus variabilis (strain ATCC 29413 / PCC 7937) (Anabaena variabilis) protein is Ribosome-binding factor A.